Consider the following 265-residue polypeptide: uncharacterized protein (265 aa).

An N-terminal signal peptide occupies residues 1–22; sequence MGYFKRVLLYIIVMVLSVFIIG. Cysteine 23 is lipidated: N-palmitoyl cysteine. Residue cysteine 23 is the site of S-diacylglycerol cysteine attachment.

It belongs to the staphylococcal tandem lipoprotein family.

Its subcellular location is the cell membrane. This is an uncharacterized protein from Staphylococcus aureus (strain MSSA476).